The sequence spans 924 residues: Lon protease homolog 3, mitochondrial (924 aa).

A mitochondrion-targeting transit peptide spans 1–63 (MMPKRFNTSG…PVQSLLLFRA (63 aa)). One can recognise a Lon N-terminal domain in the interval 112-325 (VIALPLPHKP…LTLELVKKQV (214 aa)). Residue 447–454 (GPPGVGKT) participates in ATP binding. The Lon proteolytic domain maps to 738–922 (QTPVGVVMGL…EKIFDLAFNY (185 aa)). Active-site residues include S828 and K871.

This sequence belongs to the peptidase S16 family. In terms of assembly, homohexamer or homoheptamer. Organized in a ring with a central cavity.

It is found in the mitochondrion matrix. The enzyme catalyses Hydrolysis of proteins in presence of ATP.. Its function is as follows. ATP-dependent serine protease that mediates the selective degradation of misfolded, unassembled or oxidatively damaged polypeptides as well as certain short-lived regulatory proteins in the mitochondrial matrix. May also have a chaperone function in the assembly of inner membrane protein complexes. Participates in the regulation of mitochondrial gene expression and in the maintenance of the integrity of the mitochondrial genome. Binds to mitochondrial DNA in a site-specific manner. The sequence is that of Lon protease homolog 3, mitochondrial (LON3) from Arabidopsis thaliana (Mouse-ear cress).